Consider the following 629-residue polypeptide: Sushi domain-containing protein 5 (629 aa).

An N-terminal signal peptide occupies residues 1 to 35 (MTAEGPSPPARWHRRLPGLWAAALLLLGLPRLSVR). Over 36–574 (ADGKFFVLES…DGCPGLSRGP (539 aa)) the chain is Extracellular. The Link domain occupies 39–134 (KFFVLESQNG…GGTYSALCIK (96 aa)). Intrachain disulfides connect cysteine 61-cysteine 132, cysteine 140-cysteine 184, and cysteine 167-cysteine 197. Positions 138 to 199 (KPCGDPPSFP…WYGLVQACGK (62 aa)) constitute a Sushi domain. Residues 225-249 (EDSRTEADEDRGQGDSSEEAPKQDR) show a composition bias toward basic and acidic residues. Disordered regions lie at residues 225–252 (EDSR…RLVS) and 344–403 (DGPS…GLDE). The chain crosses the membrane as a helical span at residues 575 to 595 (VIATIVTVLCLLLLLAGVGMV). The Cytoplasmic portion of the chain corresponds to 596–629 (WGYRKCQHKSSVYKLNVGQRQARHYHQQIEMEKV).

The protein resides in the membrane. This chain is Sushi domain-containing protein 5 (SUSD5), found in Homo sapiens (Human).